The sequence spans 755 residues: Protein MTSS 1 (755 aa).

The 250-residue stretch at 1–250 (MEAVIEKECS…EQVILDLKGS (250 aa)) folds into the IMD domain. Residues 108-155 (LQEQMEEWKKVANQLDKDHAKEYKKARQEIKKKSSDTLKLQKKAKKGR) are a coiled coil. Disordered regions lie at residues 139–159 (KKSSDTLKLQKKAKKGRGDIQ) and 255–305 (SYQT…RSSN). Thr-258 bears the Phosphothreonine mark. 4 positions are modified to phosphoserine: Ser-261, Ser-262, Ser-271, and Ser-322. Residues 327-351 (QDAFQSKSPSPMPPEAPNQLSNGFS) are disordered. Thr-425 carries the post-translational modification Phosphothreonine. 3 disordered regions span residues 428–470 (RRKE…TRPG), 490–513 (DTQRSSRDSLQCSSGYSTQTTTPC), and 563–755 (QAKR…PRFS). Over residues 443 to 453 (TTASGPPAAAE) the composition is skewed to low complexity. A Phosphothreonine modification is found at Thr-603. Over residues 608 to 623 (PIPIKTPVIPVKTPTV) the composition is skewed to low complexity. A phosphoserine mark is found at Ser-644 and Ser-647. Residues 656–671 (GVTSMPSSMWSGQASV) are compositionally biased toward polar residues. A WH2 domain is found at 727–744 (QGEDMLNAIRRGVKLKKT).

Belongs to the MTSS family. Binds to actin. Binds to the cytoplasmic domain of receptor protein tyrosine phosphatase delta. In terms of tissue distribution, expressed in many tissues, including spleen, thymus, prostate, testis, uterus, colon, and peripheral blood.

Its subcellular location is the cytoplasm. The protein resides in the cytoskeleton. Functionally, may be related to cancer progression or tumor metastasis in a variety of organ sites, most likely through an interaction with the actin cytoskeleton. This is Protein MTSS 1 from Homo sapiens (Human).